Reading from the N-terminus, the 339-residue chain is AT-hook motif nuclear-localized protein 26 (339 aa).

Residues 1 to 12 (MDPVQSHGSQSS) are compositionally biased toward polar residues. Disordered stretches follow at residues 1–132 (MDPV…NKPK) and 273–339 (MQTP…RPPY). A compositionally biased stretch (low complexity) spans 24–45 (LHLQQQQQHQQQHQQQQQQQFF). The span at 82-93 (NMDNIANTNSGS) shows a compositional bias: polar residues. The segment covering 102 to 113 (GGEGGSGGGGSG) has biased composition (gly residues). A DNA-binding region (a.T hook) is located at residues 118–130 (RRPRGRPAGSKNK). A PPC domain is found at 142 to 279 (ANALRTHVME…EDEMQTPVQG (138 aa)). Positions 278-291 (QGGGGGGGGGGGMG) are enriched in gly residues. Residues 292-310 (SPPMMGQQQAMAAMAAAQG) are compositionally biased toward low complexity.

It localises to the nucleus. Its function is as follows. Transcription factor that specifically binds AT-rich DNA sequences related to the nuclear matrix attachment regions (MARs). This Arabidopsis thaliana (Mouse-ear cress) protein is AT-hook motif nuclear-localized protein 26.